The primary structure comprises 326 residues: D-threonate 4-phosphate dehydrogenase (326 aa).

Substrate-binding residues include H138 and T139. Residues H168, H212, and H267 each contribute to the a divalent metal cation site. 3 residues coordinate substrate: K275, N284, and R293.

The protein belongs to the PdxA family. PdxA2 subfamily. In terms of assembly, homodimer. Requires a divalent metal cation as cofactor.

The catalysed reaction is 4-O-phospho-D-threonate + NAD(+) = dihydroxyacetone phosphate + CO2 + NADH. Catalyzes the NAD-dependent oxidation and subsequent decarboxylation of D-threonate 4-phosphate to produce dihydroxyacetone phosphate (DHAP). Can also use 4-hydroxy-L-threonine 4-phosphate as substrate. This is D-threonate 4-phosphate dehydrogenase from Pectobacterium atrosepticum (strain SCRI 1043 / ATCC BAA-672) (Erwinia carotovora subsp. atroseptica).